The following is a 279-amino-acid chain: Large ribosomal subunit protein uL2 (279 aa).

2 disordered regions span residues 31–61 (KSLLEPLTKSGGRNSAGRKTSRHRGGGHKRH) and 222–279 (GMAM…RNAK). Positions 49–61 (KTSRHRGGGHKRH) are enriched in basic residues. Residues 232-242 (MGGGEGKSKSG) show a composition bias toward gly residues. A compositionally biased stretch (basic residues) spans 259–268 (LKTRNRKKAS).

Belongs to the universal ribosomal protein uL2 family. As to quaternary structure, part of the 50S ribosomal subunit. Forms a bridge to the 30S subunit in the 70S ribosome.

Its function is as follows. One of the primary rRNA binding proteins. Required for association of the 30S and 50S subunits to form the 70S ribosome, for tRNA binding and peptide bond formation. It has been suggested to have peptidyltransferase activity; this is somewhat controversial. Makes several contacts with the 16S rRNA in the 70S ribosome. This Chlorobium chlorochromatii (strain CaD3) protein is Large ribosomal subunit protein uL2.